The chain runs to 129 residues: Cytochrome c' (129 aa).

Residues Arg-12, Gln-13, Thr-69, Glu-70, Cys-119, Cys-122, and His-123 each coordinate heme c.

In terms of processing, binds 1 heme c group covalently per subunit.

Its function is as follows. Cytochrome c' is the most widely occurring bacterial c-type cytochrome. Cytochromes c' are high-spin proteins and the heme has no sixth ligand. Their exact function is not known. This Rubrivivax gelatinosus (Rhodocyclus gelatinosus) protein is Cytochrome c'.